The sequence spans 563 residues: Putative GMC-type oxidoreductase L128 (563 aa).

The N-terminal stretch at 1 to 21 is a signal peptide; the sequence is MTSSIVLKFFLIATLLVIANS. 48–77 lines the FAD pocket; it reads DYVIVGGGAAGSVLLDKCISYGYKCTLIER. Histidine 504 (proton acceptor) is an active-site residue.

The protein belongs to the GMC oxidoreductase family. Requires FAD as cofactor.

The protein is Putative GMC-type oxidoreductase L128 of Acanthamoeba polyphaga mimivirus (APMV).